Reading from the N-terminus, the 200-residue chain is Late embryogenesis abundant protein 19 (200 aa).

Disordered regions lie at residues 1 to 158 (MASH…KSTV) and 172 to 200 (TEDK…ARDH). 5 stretches are compositionally biased toward basic and acidic residues: residues 13 to 23 (GETKAHTEEKA), 30 to 42 (SKDK…DRAS), 53 to 81 (QDTK…KDKT), 88 to 97 (ARDKAAESKD), and 105 to 114 (EKTEQAKQKA). Residues 52–81 (GQDTKEATKEKAQAAKERASETAQAAKDKT) adopt a coiled-coil conformation. Low complexity predominate over residues 115–130 (AETAGAAKQKTAETAQ). The span at 145-156 (SVLQQASEQVKS) shows a compositional bias: polar residues. The segment covering 172–183 (TEDKAGTDDGAN) has biased composition (basic and acidic residues). The span at 186–200 (TSATAAATETTARDH) shows a compositional bias: low complexity.

This sequence belongs to the LEA type 4 family. In terms of tissue distribution, expressed in the shoot apex and leaves.

In terms of biological role, involved in response to drought stress. The protein is Late embryogenesis abundant protein 19 of Oryza sativa subsp. indica (Rice).